A 905-amino-acid polypeptide reads, in one-letter code: Isoleucine--tRNA ligase (905 aa).

The 'HIGH' region signature appears at P56–T66. E563 is a binding site for L-isoleucyl-5'-AMP. The 'KMSKS' region signature appears at K604–S608. K607 serves as a coordination point for ATP.

The protein belongs to the class-I aminoacyl-tRNA synthetase family. IleS type 1 subfamily. In terms of assembly, monomer.

The protein localises to the cytoplasm. The enzyme catalyses tRNA(Ile) + L-isoleucine + ATP = L-isoleucyl-tRNA(Ile) + AMP + diphosphate. Functionally, catalyzes the attachment of isoleucine to tRNA(Ile). As IleRS can inadvertently accommodate and process structurally similar amino acids such as valine, to avoid such errors it has two additional distinct tRNA(Ile)-dependent editing activities. One activity is designated as 'pretransfer' editing and involves the hydrolysis of activated Val-AMP. The other activity is designated 'posttransfer' editing and involves deacylation of mischarged Val-tRNA(Ile). This chain is Isoleucine--tRNA ligase, found in Pelagibacter ubique (strain HTCC1062).